Here is a 171-residue protein sequence, read N- to C-terminus: MSDYKVNEATIAKKAELVDVYAQKMTEAASIVVADSRGLSVDEDTQLRKQLREAGVEFKVVKNSILRRAAEKAGLEGLSEAFSGPSAVAFSNEDVVAPAKVLADFAKDAENLEIKAGVIEGKVSSKEEIQAIASLPSRDGLLSMLLSVLQAPIRNVALAVKAVAEKEESAA.

It belongs to the universal ribosomal protein uL10 family. Part of the ribosomal stalk of the 50S ribosomal subunit. The N-terminus interacts with L11 and the large rRNA to form the base of the stalk. The C-terminus forms an elongated spine to which L12 dimers bind in a sequential fashion forming a multimeric L10(L12)X complex.

Functionally, forms part of the ribosomal stalk, playing a central role in the interaction of the ribosome with GTP-bound translation factors. In Lactococcus lactis subsp. cremoris (strain SK11), this protein is Large ribosomal subunit protein uL10.